The primary structure comprises 140 residues: Protein archease (140 aa).

Ca(2+) contacts are provided by Asp-11, Asp-139, and Leu-140.

This sequence belongs to the archease family.

Its function is as follows. Activates the tRNA-splicing ligase complex by facilitating the enzymatic turnover of catalytic subunit RtcB. Acts by promoting the guanylylation of RtcB, a key intermediate step in tRNA ligation. Can also alter the NTP specificity of RtcB such that ATP, dGTP or ITP is used efficiently. This is Protein archease from Methanopyrus kandleri (strain AV19 / DSM 6324 / JCM 9639 / NBRC 100938).